The sequence spans 632 residues: MAU2 chromatid cohesion factor homolog (632 aa).

TPR repeat units lie at residues 453 to 486 (GGFY…ANAE) and 493 to 526 (SCSL…ASKI).

It belongs to the SCC4/mau-2 family. Interacts with Nipped-B to form the cohesin loading complex.

The protein localises to the nucleus. It localises to the nucleoplasm. In terms of biological role, required for association of the cohesin complex with chromatin during interphase. Plays a role in sister chromatid cohesion and normal progression through prometaphase. This chain is MAU2 chromatid cohesion factor homolog, found in Drosophila erecta (Fruit fly).